A 912-amino-acid chain; its full sequence is MTFTKLENSSDQAVVAEEVKILTKLLNESTRQLIGDDAFAKIQDLIDTSASKDQKQLESKISSLNNREMIVVARYFATLPLLINISEDVELASKVNVFNNTDQDYLGKLSDTIDLVAQKDDAKRILENVNVVPVLTAHPTQIQRKTVLELTDKIHHLLRSYRDVKNGTINQREWTEQLRACIEILMQTDIIRGHKLKVSNEITNVLAYYPKALIPAITKFTTRYKELAKEHNLTLDQATPITMGMWIGGDRDGNPYVTADTLELSATLQSQVIFEYYMKELKKLYRAISLSTSYMQPSAAVEKLSKLSNDDSPFRTDEPYRRAFYYIESRLVHTEKELLGIIDKNIFIKPHDLENLDNIPVYNNPQEFKSDLETIKASLDEDHDQAVTHSFFTQILEAIDVFGFHLATIDMRQDSSVNESCVAELLKSAGICDNYSDLSEKEKVELLLSELENDPRNLHANNKPKSELLQKELKIYKTARQLKDRLGEDVIKQHIISHTESVSDMLEQAIMLKEYNLVDSEKARIQVVPLFETVEDLLNAREIITQYLSFPIVKKWLVSQNNYQEIMLGYSDSNKDGGYLASCWNLYKAQKDLTAIGEKLGVKITYMHGRGGTVGRGGGPSYEAITAQPFKSINDRIRMTEQGEIIQNKYGNKDTAYYNLEMLASAAIDRMVSKQAVSEERITDFRSSMDKIVEESNKIYRKLVFENPAFLDYFFQATPIKEISNLNIGSRPASRKKLTDFSGLRAIPWVFSWSQSRIMFPGWYGVGSAFANFINADPTHLKELQEMYKGWPFFHSLLSNVDMFLSKSNMEIAREYASLCDDEETKKVFDIIYQEWKLTKKVILQIEDHDDLLAEAPILKQSLDYRMPYFNILNYIQIEMIKRGREDEIQGVYQSIIPITINGVASGLRNSG.

Residues His-138 and Lys-575 contribute to the active site.

Belongs to the PEPCase type 1 family. The cofactor is Mg(2+).

The enzyme catalyses oxaloacetate + phosphate = phosphoenolpyruvate + hydrogencarbonate. Its function is as follows. Forms oxaloacetate, a four-carbon dicarboxylic acid source for the tricarboxylic acid cycle. The sequence is that of Phosphoenolpyruvate carboxylase from Lactobacillus acidophilus (strain ATCC 700396 / NCK56 / N2 / NCFM).